We begin with the raw amino-acid sequence, 200 residues long: Sorting nexin-10 (200 aa).

Positions 8–125 are required for interaction with ATP6V1D; the sequence is EEFVSVWVRD…SLHLFLQSHL (118 aa). The region spanning 10–127 is the PX domain; it reads FVSVWVRDPR…HLFLQSHLNS (118 aa). Positions 53, 79, and 94 each coordinate a 1,2-diacyl-sn-glycero-3-phospho-(1D-myo-inositol-3-phosphate). Basic and acidic residues predominate over residues 156–167; the sequence is FPEEEEGKKEND. The interval 156 to 200 is disordered; it reads FPEEEEGKKENDIDYDSESSSSGFGHSSDDSSSHGCKMSTAPQES.

It belongs to the sorting nexin family. As to quaternary structure, interacts with ATP6V1D; may play a role in ciliogenesis.

The protein localises to the cytoplasm. Its subcellular location is the endosome membrane. The protein resides in the cytoskeleton. It localises to the microtubule organizing center. It is found in the centrosome. In terms of biological role, probable phosphoinositide-binding protein involved in protein sorting and membrane trafficking in endosomes. Plays a role in cilium biogenesis through regulation of the transport and the localization of proteins to the cilium. Required for the localization to the cilium of V-ATPase subunit ATP6V1D and ATP6V0D1, and RAB8A. Involved in osteoclast differentiation and therefore bone resorption. The sequence is that of Sorting nexin-10 (SNX10) from Bos taurus (Bovine).